The sequence spans 304 residues: Coenzyme PQQ synthesis protein B (304 aa).

The protein belongs to the PqqB family.

It participates in cofactor biosynthesis; pyrroloquinoline quinone biosynthesis. In terms of biological role, may be involved in the transport of PQQ or its precursor to the periplasm. This Ectopseudomonas mendocina (strain ymp) (Pseudomonas mendocina) protein is Coenzyme PQQ synthesis protein B.